The chain runs to 318 residues: UAP56-interacting factor (318 aa).

At Met-1 the chain carries N-acetylmethionine. Residues 1–25 (MNRFGTRLVGATATSSPPPKARSNE) form a disordered region. A Phosphothreonine modification is found at Thr-14. Ser-16 and Ser-23 each carry phosphoserine. A UAP56-binding motif motif is present at residues 26–44 (NLDKIDMSLDDIIKLNRKE). Ser-61 carries the post-translational modification Phosphoserine. Positions 79–100 (GFGKTSLNRRGRVMPGKRRPNG) are disordered. Basic residues predominate over residues 85-98 (LNRRGRVMPGKRRP). The residue at position 118 (Ser-118) is a Phosphoserine. A Glycyl lysine isopeptide (Lys-Gly) (interchain with G-Cter in SUMO1) cross-link involves residue Lys-140. Residue Lys-261 forms a Glycyl lysine isopeptide (Lys-Gly) (interchain with G-Cter in SUMO2) linkage.

This sequence belongs to the UIF family. As to quaternary structure, interacts with CHTOP. Interacts with DDX39B/UAP56 and NXF1; interaction with DDX39B/UAP56 and NXF1 are mutually exclusive. Interacts with SSRP1; required for its recruitment to mRNAs. In terms of tissue distribution, expressed in a wide variety of cancer types.

It localises to the nucleus. The protein localises to the nucleoplasm. It is found in the nucleus speckle. Required for mRNA export from the nucleus to the cytoplasm. Acts as an adapter that uses the DDX39B/UAP56-NFX1 pathway to ensure efficient mRNA export and delivering to the nuclear pore. Associates with spliced and unspliced mRNAs simultaneously with ALYREF/THOC4. The sequence is that of UAP56-interacting factor (FYTTD1) from Homo sapiens (Human).